We begin with the raw amino-acid sequence, 225 residues long: Enolase-phosphatase E1 (225 aa).

Belongs to the HAD-like hydrolase superfamily. MasA/MtnC family. Monomer. Mg(2+) serves as cofactor.

The catalysed reaction is 5-methylsulfanyl-2,3-dioxopentyl phosphate + H2O = 1,2-dihydroxy-5-(methylsulfanyl)pent-1-en-3-one + phosphate. It participates in amino-acid biosynthesis; L-methionine biosynthesis via salvage pathway; L-methionine from S-methyl-5-thio-alpha-D-ribose 1-phosphate: step 3/6. The protein operates within amino-acid biosynthesis; L-methionine biosynthesis via salvage pathway; L-methionine from S-methyl-5-thio-alpha-D-ribose 1-phosphate: step 4/6. Functionally, bifunctional enzyme that catalyzes the enolization of 2,3-diketo-5-methylthiopentyl-1-phosphate (DK-MTP-1-P) into the intermediate 2-hydroxy-3-keto-5-methylthiopentenyl-1-phosphate (HK-MTPenyl-1-P), which is then dephosphorylated to form the acireductone 1,2-dihydroxy-3-keto-5-methylthiopentene (DHK-MTPene). In Shewanella woodyi (strain ATCC 51908 / MS32), this protein is Enolase-phosphatase E1.